The sequence spans 395 residues: Glutamate N-acetyltransferase (395 aa).

The substrate site is built by Thr-146, Lys-169, Thr-180, Glu-263, Asn-390, and Thr-395. The active-site Nucleophile is the Thr-180.

This sequence belongs to the ArgJ family. In terms of assembly, heterotetramer of two alpha and two beta chains.

It is found in the cytoplasm. It carries out the reaction N(2)-acetyl-L-ornithine + L-glutamate = N-acetyl-L-glutamate + L-ornithine. It functions in the pathway amino-acid biosynthesis; L-arginine biosynthesis; L-ornithine and N-acetyl-L-glutamate from L-glutamate and N(2)-acetyl-L-ornithine (cyclic): step 1/1. Functionally, catalyzes the transfer of the acetyl group from N(2)-acetylornithine to glutamate, forming N-acetylglutamate and L-ornithine. The polypeptide is Glutamate N-acetyltransferase (Methanosarcina mazei (strain ATCC BAA-159 / DSM 3647 / Goe1 / Go1 / JCM 11833 / OCM 88) (Methanosarcina frisia)).